The chain runs to 466 residues: GTPase Der (466 aa).

2 EngA-type G domains span residues 30-193 (PVVA…PEVS) and 203-376 (RRVA…ASWD). GTP contacts are provided by residues 36 to 43 (GRPNVGKS), 83 to 87 (DTGGW), 145 to 148 (NKVD), 209 to 216 (GKPNVGKS), 256 to 260 (DTAGL), and 321 to 324 (NKWD). Positions 377–459 (TRIATGPLNS…PIRINVRVRE (83 aa)) constitute a KH-like domain.

It belongs to the TRAFAC class TrmE-Era-EngA-EngB-Septin-like GTPase superfamily. EngA (Der) GTPase family. As to quaternary structure, associates with the 50S ribosomal subunit.

In terms of biological role, GTPase that plays an essential role in the late steps of ribosome biogenesis. The protein is GTPase Der of Mycobacterium avium (strain 104).